The chain runs to 600 residues: Kelch-like protein 24 (600 aa).

Residues 66-133 (TDVIICVEGK…VYTGKVKITT (68 aa)) form the BTB domain. The BACK domain maps to 168 to 270 (CLGIQRFADT…HPNYFVQTVE (103 aa)). Kelch repeat units lie at residues 314-363 (VIVV…ALRN), 365-407 (ILVS…VLLG), 408-454 (KVYV…SCVG), 456-502 (LFVI…SLNN), 504-544 (IYVA…VCNG), and 546-592 (IYIL…TIHR).

In terms of assembly, forms homodimers. Interacts with GRIK2. Component of the BCR(KLHL24) E3 ubiquitin ligase complex, composed of CUL3, RBX1 and KLHL24. Interacts with CUL3. Interacts with KRT14. In terms of processing, autoubiquitinated. Autoubiquitination leads to proteasomal degradation and is necessary to control KLHL24 levels. As to expression, expressed in the skin. Found in keratinocytes, dermal fibroblasts, and melanocytes. Basal-layer keratinocytes have lower KLHL24 expression than suprabasal keratinocytes. Expressed in the brain, spinal cord, liver, testis, heart and at higher levels in the skeletal muscle.

It is found in the perikaryon. The protein resides in the cell projection. The protein localises to the axon. It localises to the cytoplasm. Its subcellular location is the cell junction. It is found in the desmosome. The protein resides in the adherens junction. Functionally, necessary to maintain the balance between intermediate filament stability and degradation, a process that is essential for skin integrity. As part of the BCR(KLHL24) E3 ubiquitin ligase complex, mediates ubiquitination of KRT14 and controls its levels during keratinocytes differentiation. Specifically reduces kainate receptor-mediated currents in hippocampal neurons, most probably by modulating channel properties. Has a crucial role in cardiac development and function. The sequence is that of Kelch-like protein 24 (KLHL24) from Homo sapiens (Human).